The primary structure comprises 261 residues: uncharacterized protein (261 aa).

The NADP(+) site is built by Ile33, Asp78, and Asn105. Ser157 functions as the Proton donor in the catalytic mechanism. NADP(+) is bound by residues Tyr172, Lys176, and Ser206. Tyr172 (proton acceptor) is an active-site residue. The active-site Lowers pKa of active site Tyr is Lys176.

This sequence belongs to the short-chain dehydrogenases/reductases (SDR) family.

It is found in the cytoplasm. The protein localises to the nucleus. This is an uncharacterized protein from Schizosaccharomyces pombe (strain 972 / ATCC 24843) (Fission yeast).